A 523-amino-acid polypeptide reads, in one-letter code: Bifunctional purine biosynthesis protein PurH (523 aa).

An MGS-like domain is found at 4 to 152 (DHIRRPIRRA…KNHPSVAVVT (149 aa)).

The protein belongs to the PurH family.

The enzyme catalyses (6R)-10-formyltetrahydrofolate + 5-amino-1-(5-phospho-beta-D-ribosyl)imidazole-4-carboxamide = 5-formamido-1-(5-phospho-D-ribosyl)imidazole-4-carboxamide + (6S)-5,6,7,8-tetrahydrofolate. It catalyses the reaction IMP + H2O = 5-formamido-1-(5-phospho-D-ribosyl)imidazole-4-carboxamide. It functions in the pathway purine metabolism; IMP biosynthesis via de novo pathway; 5-formamido-1-(5-phospho-D-ribosyl)imidazole-4-carboxamide from 5-amino-1-(5-phospho-D-ribosyl)imidazole-4-carboxamide (10-formyl THF route): step 1/1. It participates in purine metabolism; IMP biosynthesis via de novo pathway; IMP from 5-formamido-1-(5-phospho-D-ribosyl)imidazole-4-carboxamide: step 1/1. The protein is Bifunctional purine biosynthesis protein PurH of Mycobacterium ulcerans (strain Agy99).